We begin with the raw amino-acid sequence, 75 residues long: Large ribosomal subunit protein bL31 (75 aa).

This sequence belongs to the bacterial ribosomal protein bL31 family. Type A subfamily. Part of the 50S ribosomal subunit.

In terms of biological role, binds the 23S rRNA. This is Large ribosomal subunit protein bL31 from Pelodictyon phaeoclathratiforme (strain DSM 5477 / BU-1).